A 291-amino-acid chain; its full sequence is m-AAA protease-interacting protein 1, mitochondrial (291 aa).

The transit peptide at 1 to 96 directs the protein to the mitochondrion; the sequence is MALAARLLPL…SLPASPSRSY (96 aa).

As to quaternary structure, interacts with AFG3L2. Interacts with SPG7. Interacts with SMDT1/EMRE (via the N-terminal transit peptide); interaction is direct and takes place before maturation of SMDT1/EMRE.

It localises to the mitochondrion matrix. Promotes sorting of SMDT1/EMRE in mitochondria by ensuring its maturation. Interacts with the transit peptide region of SMDT1/EMRE precursor protein in the mitochondrial matrix, leading to protect it against protein degradation by YME1L1, thereby ensuring SMDT1/EMRE maturation by the mitochondrial processing peptidase (PMPCA and PMPCB). This Mus musculus (Mouse) protein is m-AAA protease-interacting protein 1, mitochondrial.